A 309-amino-acid chain; its full sequence is Porphobilinogen deaminase (309 aa).

Cysteine 243 is subject to S-(dipyrrolylmethanemethyl)cysteine.

Belongs to the HMBS family. In terms of assembly, monomer. The cofactor is dipyrromethane.

The enzyme catalyses 4 porphobilinogen + H2O = hydroxymethylbilane + 4 NH4(+). Its pathway is porphyrin-containing compound metabolism; protoporphyrin-IX biosynthesis; coproporphyrinogen-III from 5-aminolevulinate: step 2/4. Functionally, tetrapolymerization of the monopyrrole PBG into the hydroxymethylbilane pre-uroporphyrinogen in several discrete steps. The chain is Porphobilinogen deaminase (hemC) from Deinococcus radiodurans (strain ATCC 13939 / DSM 20539 / JCM 16871 / CCUG 27074 / LMG 4051 / NBRC 15346 / NCIMB 9279 / VKM B-1422 / R1).